The chain runs to 318 residues: Receptor homology region, transmembrane domain- and RING domain-containing protein 6 (318 aa).

The first 20 residues, 1-20, serve as a signal peptide directing secretion; that stretch reads MNGSWITILSLLVISQLASS. Topologically, residues 22–162 are lumenal; that stretch reads VTLIGKNTFL…LIPGFGISSW (141 aa). Residues Cys62 and Cys87 are joined by a disulfide bond. Residues 70-143 enclose the PA domain; that stretch reads EKGSKFRPSY…RTSGEVLKEY (74 aa). Asn121 carries N-linked (GlcNAc...) asparagine glycosylation. A helical transmembrane segment spans residues 163–183; sequence SIMAITFVSLLVISAVLASYF. The Cytoplasmic portion of the chain corresponds to 184–318; sequence SVRRHRIRQH…DLPIVVRVYL (135 aa). The RING-type; atypical zinc-finger motif lies at 233-275; that stretch reads CAICIDDYRVGEILRILPCKHKYHAVCIDSWLGRCRSFCPVCK.

It localises to the prevacuolar compartment membrane. It is found in the protein storage vacuole membrane. Its function is as follows. Involved in the trafficking of vacuolar proteins. May function as a sorting receptor for protein trafficking to the protein storage vacuole (PSV). The polypeptide is Receptor homology region, transmembrane domain- and RING domain-containing protein 6 (RMR6) (Arabidopsis thaliana (Mouse-ear cress)).